The following is a 181-amino-acid chain: K99 fimbrial protein (181 aa).

A signal peptide spans 1–22; that stretch reads MKKTLLAIILGGMAFATTNASA. An intrachain disulfide couples C38 to C79.

This sequence belongs to the fimbrial protein family.

The protein localises to the fimbrium. Functionally, fimbriae (also called pili), polar filaments radiating from the surface of the bacterium to a length of 0.5-1.5 micrometers and numbering 100-300 per cell, enable bacteria to colonize the epithelium of specific host organs. Its function is as follows. FanC is the main component of the K99 fimbriae. The sequence is that of K99 fimbrial protein (fanC) from Escherichia coli.